The sequence spans 83 residues: Aspergillic acid biosynthesis cluster protein F (83 aa).

It participates in secondary metabolite biosynthesis. Its function is as follows. Part of the gene cluster that mediates the biosynthesis of aspergillic acid, a hydroxamic acid-containing pyrazinone with aliphatic side chains that originates from leucine (Leu) and isoleucine (Ile). Aspergillic acid has antibiotic properties and was shown to be lethal to mice. The first step in the pathway is the production of deoxyaspergillic acid via a condensation between the Ile amine and the Leu carboxylic acid, followed by a reductive release from the protein forming the dipeptide aldehyde NH(2)-Leu-Ile-CHO, which could undergo an intermolecular cyclization resulting in a dihydropyrazinone. As the NRPS asaC lacks a condensation domain, it is improbable that it is responsible for condensation of Leu and Ile. One possibility is that asaC acts on a previously condensed dipeptide and functions as a Leu-Ile reductase to yield deoxyaspergillic acid. After asaC forms deoxyaspergillic acid, the cytochrome P450 asaD oxidizes the pyrazinone to the hydroxamic acid-containing bioactive metabolite aspergillic acid. The hydroxylase/desaturase asaB can then convert aspergillic acid to hydroxyaspergillic acid. Both aspergillic acid and hydroxyaspergillic acid can form complexes with iron producing ferriaspergillin analogs. The polypeptide is Aspergillic acid biosynthesis cluster protein F (Aspergillus flavus (strain ATCC 200026 / FGSC A1120 / IAM 13836 / NRRL 3357 / JCM 12722 / SRRC 167)).